Here is a 144-residue protein sequence, read N- to C-terminus: Interleukin-9 (144 aa).

The first 18 residues, methionine 1–glycine 18, serve as a signal peptide directing secretion. Glutamine 19 carries the pyrrolidone carboxylic acid modification. Asparagine 50, asparagine 78, asparagine 101, and asparagine 114 each carry an N-linked (GlcNAc...) asparagine glycan.

This sequence belongs to the IL-7/IL-9 family. In terms of assembly, interacts with IL9R. Interacts with IL2RG.

It localises to the secreted. Functionally, multifunctional cytokine secreted mainly by T-helper 2 lymphocytes and also mast cells or NKT cells that plays important roles in the immune response against parasites. Affects intestinal epithelial permeability and adaptive immunity. In addition, induces the differentiation of specific T-cell subsets such as IL-17 producing helper T-cells (TH17) and also proliferation and differentiation of mast cells. Mechanistically, exerts its biological effects through a receptor composed of IL9R subunit and a signal transducing subunit IL2RG. Receptor stimulation results in the rapid activation of JAK1 and JAK3 kinase activities leading to STAT1, STAT3 and STAT5-mediated transcriptional programs. Induction of differentiation genes seems to be mediated by STAT1 alone, while protection of cells from apoptosis depends on STAT3 and STAT5. In Mus musculus (Mouse), this protein is Interleukin-9 (Il9).